Reading from the N-terminus, the 81-residue chain is Photosystem I iron-sulfur center (81 aa).

4Fe-4S ferredoxin-type domains are found at residues 2–31 (SHSV…MIPW) and 39–68 (IASA…VRVY). C11, C14, C17, C21, C48, C51, C54, and C58 together coordinate [4Fe-4S] cluster.

In terms of assembly, the eukaryotic PSI reaction center is composed of at least 11 subunits. [4Fe-4S] cluster is required as a cofactor.

The protein resides in the plastid. The protein localises to the chloroplast thylakoid membrane. It catalyses the reaction reduced [plastocyanin] + hnu + oxidized [2Fe-2S]-[ferredoxin] = oxidized [plastocyanin] + reduced [2Fe-2S]-[ferredoxin]. In terms of biological role, apoprotein for the two 4Fe-4S centers FA and FB of photosystem I (PSI); essential for photochemical activity. FB is the terminal electron acceptor of PSI, donating electrons to ferredoxin. The C-terminus interacts with PsaA/B/D and helps assemble the protein into the PSI complex. Required for binding of PsaD and PsaE to PSI. PSI is a plastocyanin-ferredoxin oxidoreductase, converting photonic excitation into a charge separation, which transfers an electron from the donor P700 chlorophyll pair to the spectroscopically characterized acceptors A0, A1, FX, FA and FB in turn. The chain is Photosystem I iron-sulfur center from Phaseolus vulgaris (Kidney bean).